A 600-amino-acid chain; its full sequence is MRVTTSFPLGTLRDTPSEAEIISHQLLLKGGYIRRVNSGIYAYMPIMLRVIEKISTIIEKELNNIYCSKLLLPQLHPAELWKKSERWEGYTAGEGIMFNLKDRQGKEFGLAPTHEEVITSIASEMINSYKQLPLCFYQIQTKFRDEIRPRFGLMRSREFIMKDAYSFHSSKEDLASFYEKMEKAYENIFKNCGLDTVGVDADSGAIGGAASKEFMVTADAGEDSILFTESGSYAANIEKAVSLPSKEIPLIRSHEEWIETPNQKSIVDICQNNNLDASQIIKVVIFLAKFEDKSEVPILACIRGDQNINEVKLFNLINKKYISNLIHLKIVDDNAIINKNLINFPLGFIGPDINDETIKINSSWDKSWIRIADYSASSLSIFVSGGNKVDFHKVFRAFSFIEKKFLISDIRNAKKGDCISQESNEELKEKRGIEIGHIFQLGQKYSEKLNAKFSDKNGQLKNLWMGCYGIGVTRIAQAAIEQNHDENGISWPIQISPFEILIIPTNLKDPIQKELTQEIYEEFISNQIDVLLDDRDDRAGVKFKDADLIGIPFQIIIGRDSINKEVEFFSRSSKSKIKIASKNLLEKFISESKVMYNKNS.

It belongs to the class-II aminoacyl-tRNA synthetase family. ProS type 1 subfamily. In terms of assembly, homodimer.

It is found in the cytoplasm. It carries out the reaction tRNA(Pro) + L-proline + ATP = L-prolyl-tRNA(Pro) + AMP + diphosphate. Catalyzes the attachment of proline to tRNA(Pro) in a two-step reaction: proline is first activated by ATP to form Pro-AMP and then transferred to the acceptor end of tRNA(Pro). As ProRS can inadvertently accommodate and process non-cognate amino acids such as alanine and cysteine, to avoid such errors it has two additional distinct editing activities against alanine. One activity is designated as 'pretransfer' editing and involves the tRNA(Pro)-independent hydrolysis of activated Ala-AMP. The other activity is designated 'posttransfer' editing and involves deacylation of mischarged Ala-tRNA(Pro). The misacylated Cys-tRNA(Pro) is not edited by ProRS. The chain is Proline--tRNA ligase from Prochlorococcus marinus subsp. pastoris (strain CCMP1986 / NIES-2087 / MED4).